A 440-amino-acid chain; its full sequence is Thymidine phosphorylase (440 aa).

The protein belongs to the thymidine/pyrimidine-nucleoside phosphorylase family. As to quaternary structure, homodimer.

The catalysed reaction is thymidine + phosphate = 2-deoxy-alpha-D-ribose 1-phosphate + thymine. The protein operates within pyrimidine metabolism; dTMP biosynthesis via salvage pathway; dTMP from thymine: step 1/2. Functionally, the enzymes which catalyze the reversible phosphorolysis of pyrimidine nucleosides are involved in the degradation of these compounds and in their utilization as carbon and energy sources, or in the rescue of pyrimidine bases for nucleotide synthesis. The protein is Thymidine phosphorylase of Serratia proteamaculans (strain 568).